A 1196-amino-acid chain; its full sequence is Nucleolar protein 6 (1196 aa).

2 disordered regions span residues 1–74 and 1140–1196; these read MPGK…NVKP and KREQ…KALK. Composition is skewed to basic and acidic residues over residues 22-31 and 65-74; these read HAEDHSDLEH and HRGDTKNVKP. The span at 1165-1187 shows a compositional bias: basic residues; sequence KPKKHGKRKGTGKAAPPKKKRLI.

The protein belongs to the NRAP family. Part of the small subunit (SSU) processome, composed of more than 70 proteins and the RNA chaperone small nucleolar RNA (snoRNA) U3.

The protein localises to the nucleus. The protein resides in the nucleolus. Its subcellular location is the chromosome. In terms of biological role, part of the small subunit (SSU) processome, first precursor of the small eukaryotic ribosomal subunit. During the assembly of the SSU processome in the nucleolus, many ribosome biogenesis factors, an RNA chaperone and ribosomal proteins associate with the nascent pre-rRNA and work in concert to generate RNA folding, modifications, rearrangements and cleavage as well as targeted degradation of pre-ribosomal RNA by the RNA exosome. The protein is Nucleolar protein 6 of Drosophila simulans (Fruit fly).